The primary structure comprises 1112 residues: MSGGDVEEYLRGADMPEEYRRYYSSLSGGTYDIFEKAASAKSNLADSSGMVEPKIAVDLSDRVAKMHDLDIAGPLRELLATKGKELAALMLAKEIMDGKYLPEADIEKRIDSAVRVGLAVVTEGVTIAPLQGIADVITKKNKDGSEYLSVSIAGPMRSAGGTESAVTMLIADYVRRQAGLAEYQADSLDDETGRFIEELRIYEREVGSFQFHVLDEDIRAVISHLPVELDGVDTDPYEVVNHKGMSRIQTDRVRGGALRVLNDGLIGRSKKLLKRIELYGLDGWEWLAELKGAVQTGENKEDAAAKRMREVITGRSVLSMPNRLGGFRLRYGRACNTGYTSVGFHPAVAEILDHTIAVGTQVKIDIPGKGATVAFVDTIEAPTVRLAGGDVVKIRDVAHGIELKGSIERILHLGDMLISFGDFLENNAQLVPSGYVEEIWKMDMEAAGAAQGSPSSADEAVRISRELGVPLHPRYLYYWDQISHEELAMLLSPLDKGDAISYPAACKPVLEKLGVPHKAGPEGPVLEGDEARIFRELILDNPPGPDASAPVPELISRSSGITIRDKFSTSIGVRIGRPEKAAPRQMRPPTHCLFPVGGTGGPTNNLLKSAARPGFSADILSRRCPGCGEPSISIRCWACGERTAVERTCMQCGTDVDGEECERCGRPGLAHSRVEFPLKKMLVSAQEKTGVRAHDPLKGVKELAHQDRIAEPLEKGLIRQSRSLTVFKDGTVRFDATNSPMTHFKPSWIGTSAEKLRELGYETDVDGKKLEGPDQLVELRMQDIVIPLEGAKYLVSACGYIDAELDKLYGAPPFYKVPDLGGLIGHLVVGLAPHTSVGVAARIIGYTETHVCFGTPNWHSAKRRDADGDADSIILLMDALLNFSRHYLSDRIGGLMDAPLLIQPLVLPHESQSQAHNIEVVKRLPPGFYEAAAARKKASEVGCVEIVKSRLETAGQFGGYHFTHGTSSLTTSRPRSAYSTLGSMLDKLDLQIRNANLIAAVDAAEIISNVISTHLVPDIMGNLRAYARQNFRCTACGKSYRRIPLAQRCSCGNGLIQTITRASVEKYLKLAKRLVNEYDVGAYQRGRIHALSDEIELVFGKGGGDQALLTDF.

This sequence belongs to the archaeal DNA polymerase II family. In terms of assembly, heterodimer of a large subunit and a small subunit.

It catalyses the reaction DNA(n) + a 2'-deoxyribonucleoside 5'-triphosphate = DNA(n+1) + diphosphate. The catalysed reaction is Exonucleolytic cleavage in the 3'- to 5'-direction to yield nucleoside 5'-phosphates.. Functionally, possesses two activities: a DNA synthesis (polymerase) and an exonucleolytic activity that degrades single-stranded DNA in the 3'- to 5'-direction. Has a template-primer preference which is characteristic of a replicative DNA polymerase. The chain is DNA polymerase II large subunit from Cenarchaeum symbiosum (strain A).